Consider the following 233-residue polypeptide: 2-C-methyl-D-erythritol 4-phosphate cytidylyltransferase (233 aa).

Belongs to the IspD/TarI cytidylyltransferase family. IspD subfamily.

The catalysed reaction is 2-C-methyl-D-erythritol 4-phosphate + CTP + H(+) = 4-CDP-2-C-methyl-D-erythritol + diphosphate. It functions in the pathway isoprenoid biosynthesis; isopentenyl diphosphate biosynthesis via DXP pathway; isopentenyl diphosphate from 1-deoxy-D-xylulose 5-phosphate: step 2/6. Its function is as follows. Catalyzes the formation of 4-diphosphocytidyl-2-C-methyl-D-erythritol from CTP and 2-C-methyl-D-erythritol 4-phosphate (MEP). The protein is 2-C-methyl-D-erythritol 4-phosphate cytidylyltransferase of Lachnoclostridium phytofermentans (strain ATCC 700394 / DSM 18823 / ISDg) (Clostridium phytofermentans).